The primary structure comprises 438 residues: 3-phosphoshikimate 1-carboxyvinyltransferase (438 aa).

3-phosphoshikimate-binding residues include lysine 21, serine 22, and arginine 26. A phosphoenolpyruvate-binding site is contributed by lysine 21. Positions 95 and 123 each coordinate phosphoenolpyruvate. Serine 167, glutamine 169, aspartate 315, and lysine 342 together coordinate 3-phosphoshikimate. Glutamine 169 is a binding site for phosphoenolpyruvate. The active-site Proton acceptor is the aspartate 315. Phosphoenolpyruvate-binding residues include arginine 346 and arginine 387.

It belongs to the EPSP synthase family. Monomer.

It localises to the cytoplasm. The enzyme catalyses 3-phosphoshikimate + phosphoenolpyruvate = 5-O-(1-carboxyvinyl)-3-phosphoshikimate + phosphate. The protein operates within metabolic intermediate biosynthesis; chorismate biosynthesis; chorismate from D-erythrose 4-phosphate and phosphoenolpyruvate: step 6/7. In terms of biological role, catalyzes the transfer of the enolpyruvyl moiety of phosphoenolpyruvate (PEP) to the 5-hydroxyl of shikimate-3-phosphate (S3P) to produce enolpyruvyl shikimate-3-phosphate and inorganic phosphate. This Coxiella burnetii (strain CbuK_Q154) (Coxiella burnetii (strain Q154)) protein is 3-phosphoshikimate 1-carboxyvinyltransferase.